We begin with the raw amino-acid sequence, 311 residues long: MNRTPSLHTKEKKGFIDMHTMWKGSISFGLVNIPIKLYAATEDKDIKLRSLHKEDHAPIKYEKVCTNCEKTLSPDEIVKGYEYVKGKYVVLTDEDLKSLKQEHEEKAVEIVDFVQLQEIDPIYFNRSYFVGPGDNGTKAYTLLREALRSTGKIGIANMTIRSKQQLAILRVYENCIVMESIHYPDEVRSAAQVPGVPDQSNVNDKELQTAITLIDELTAKFEPEKYEDTYRQALLQRVNDKLENKETAVTPDKAPPREDVIDLVSALQASIDRTRRPNRETPAAAPAQAAEPKGAGDKKQKTTRKKASGTS.

In terms of domain architecture, Ku spans 26 to 210; the sequence is ISFGLVNIPI…NVNDKELQTA (185 aa). The disordered stretch occupies residues 269–311; it reads ASIDRTRRPNRETPAAAPAQAAEPKGAGDKKQKTTRKKASGTS. A compositionally biased stretch (low complexity) spans 282–293; sequence PAAAPAQAAEPK. Residues 301-311 are compositionally biased toward basic residues; sequence KTTRKKASGTS.

The protein belongs to the prokaryotic Ku family. In terms of assembly, homodimer. Interacts with LigD.

It is found in the spore core. In terms of biological role, with LigD forms a non-homologous end joining (NHEJ) DNA repair enzyme, which repairs dsDNA breaks with reduced fidelity. Binds linear dsDNA with 5'- and 3'- overhangs but not closed circular dsDNA nor ssDNA. Recruits and stimulates the ligase activity of LigD. Probably involved in DNA repair during spore germination. This Bacillus subtilis (strain 168) protein is Non-homologous end joining protein Ku.